The primary structure comprises 428 residues: 3-phosphoshikimate 1-carboxyvinyltransferase (428 aa).

K20, S21, and R25 together coordinate 3-phosphoshikimate. K20 contacts phosphoenolpyruvate. Residues G92 and R120 each contribute to the phosphoenolpyruvate site. 3-phosphoshikimate is bound by residues S166, Q168, D314, and K341. Q168 serves as a coordination point for phosphoenolpyruvate. Catalysis depends on D314, which acts as the Proton acceptor. Positions 345 and 387 each coordinate phosphoenolpyruvate.

Belongs to the EPSP synthase family. As to quaternary structure, monomer.

It is found in the cytoplasm. It catalyses the reaction 3-phosphoshikimate + phosphoenolpyruvate = 5-O-(1-carboxyvinyl)-3-phosphoshikimate + phosphate. It functions in the pathway metabolic intermediate biosynthesis; chorismate biosynthesis; chorismate from D-erythrose 4-phosphate and phosphoenolpyruvate: step 6/7. In terms of biological role, catalyzes the transfer of the enolpyruvyl moiety of phosphoenolpyruvate (PEP) to the 5-hydroxyl of shikimate-3-phosphate (S3P) to produce enolpyruvyl shikimate-3-phosphate and inorganic phosphate. This is 3-phosphoshikimate 1-carboxyvinyltransferase from Listeria monocytogenes serovar 1/2a (strain ATCC BAA-679 / EGD-e).